The following is a 227-amino-acid chain: PKHD-type hydroxylase azo0608 (227 aa).

A Fe2OG dioxygenase domain is found at Arg78–Ser178. Residues His97, Asp99, and His159 each coordinate Fe cation. Arg169 contributes to the 2-oxoglutarate binding site.

Fe(2+) serves as cofactor. It depends on L-ascorbate as a cofactor.

The chain is PKHD-type hydroxylase azo0608 from Azoarcus sp. (strain BH72).